We begin with the raw amino-acid sequence, 241 residues long: tRNA pseudouridine synthase B (241 aa).

Aspartate 52 functions as the Nucleophile in the catalytic mechanism.

It belongs to the pseudouridine synthase TruB family. Type 1 subfamily.

The catalysed reaction is uridine(55) in tRNA = pseudouridine(55) in tRNA. Functionally, responsible for synthesis of pseudouridine from uracil-55 in the psi GC loop of transfer RNAs. The protein is tRNA pseudouridine synthase B of Chloroherpeton thalassium (strain ATCC 35110 / GB-78).